A 585-amino-acid polypeptide reads, in one-letter code: Bifunctional purine biosynthesis protein ade10 (585 aa).

The 142-residue stretch at 1–142 (MYALLSVYDK…KNHARVTILS (142 aa)) folds into the MGS-like domain. Residues 30 to 33 (SGGT), 60 to 63 (RVKT), 97 to 98 (CN), and 121 to 122 (DI) each bind IMP. The Proton donor/acceptor; for FAICAR cyclization activity role is filled by K133. Residues 200–201 (RY), H260, G308, D331, N423, and R443 contribute to the 5-amino-1-(5-phospho-beta-D-ribosyl)imidazole-4-carboxamide site. The Proton acceptor; for AICAR formyltransferase activity role is filled by H260. I444 lines the (6R)-10-formyltetrahydrofolate pocket. F534 provides a ligand contact to 5-amino-1-(5-phospho-beta-D-ribosyl)imidazole-4-carboxamide. (6R)-10-formyltetrahydrofolate contacts are provided by residues D539 and 558–559 (SV). Position 581 (R581) interacts with 5-amino-1-(5-phospho-beta-D-ribosyl)imidazole-4-carboxamide.

This sequence belongs to the PurH family. As to quaternary structure, homodimer.

The protein localises to the cytoplasm. It localises to the cytosol. The enzyme catalyses (6R)-10-formyltetrahydrofolate + 5-amino-1-(5-phospho-beta-D-ribosyl)imidazole-4-carboxamide = 5-formamido-1-(5-phospho-D-ribosyl)imidazole-4-carboxamide + (6S)-5,6,7,8-tetrahydrofolate. It catalyses the reaction IMP + H2O = 5-formamido-1-(5-phospho-D-ribosyl)imidazole-4-carboxamide. It functions in the pathway purine metabolism; IMP biosynthesis via de novo pathway; 5-formamido-1-(5-phospho-D-ribosyl)imidazole-4-carboxamide from 5-amino-1-(5-phospho-D-ribosyl)imidazole-4-carboxamide (10-formyl THF route): step 1/1. Its pathway is purine metabolism; IMP biosynthesis via de novo pathway; IMP from 5-formamido-1-(5-phospho-D-ribosyl)imidazole-4-carboxamide: step 1/1. Its function is as follows. Bifunctional enzyme that catalyzes the last two steps of purine biosynthesis. Acts as a transformylase that incorporates a formyl group to the AMP analog AICAR (5-amino-1-(5-phospho-beta-D-ribosyl)imidazole-4-carboxamide) to produce the intermediate formyl-AICAR (FAICAR). Also catalyzes the cyclization of FAICAR to IMP. This is Bifunctional purine biosynthesis protein ade10 (ade10) from Schizosaccharomyces pombe (strain 972 / ATCC 24843) (Fission yeast).